The primary structure comprises 261 residues: tRNA pseudouridine synthase A (261 aa).

Residue aspartate 51 is the Nucleophile of the active site. Substrate is bound at residue tyrosine 109.

This sequence belongs to the tRNA pseudouridine synthase TruA family. Homodimer.

The enzyme catalyses uridine(38/39/40) in tRNA = pseudouridine(38/39/40) in tRNA. Formation of pseudouridine at positions 38, 39 and 40 in the anticodon stem and loop of transfer RNAs. This chain is tRNA pseudouridine synthase A, found in Shewanella piezotolerans (strain WP3 / JCM 13877).